Here is a 346-residue protein sequence, read N- to C-terminus: Anthranilate phosphoribosyltransferase (346 aa).

5-phospho-alpha-D-ribose 1-diphosphate contacts are provided by residues Gly81, 84–85, 91–94, 109–117, and Ser121; these read GD, NVST, and KHGGRSVSS. Anthranilate is bound at residue Gly81. Ser93 provides a ligand contact to Mg(2+). Anthranilate is bound at residue Arg167. Asp226 and Glu227 together coordinate Mg(2+).

It belongs to the anthranilate phosphoribosyltransferase family. As to quaternary structure, homodimer. The cofactor is Mg(2+).

It carries out the reaction N-(5-phospho-beta-D-ribosyl)anthranilate + diphosphate = 5-phospho-alpha-D-ribose 1-diphosphate + anthranilate. The protein operates within amino-acid biosynthesis; L-tryptophan biosynthesis; L-tryptophan from chorismate: step 2/5. Functionally, catalyzes the transfer of the phosphoribosyl group of 5-phosphorylribose-1-pyrophosphate (PRPP) to anthranilate to yield N-(5'-phosphoribosyl)-anthranilate (PRA). The chain is Anthranilate phosphoribosyltransferase from Marinomonas sp. (strain MWYL1).